The sequence spans 139 residues: Protein LTO1 homolog (139 aa).

Belongs to the LTO1 family.

This Dictyostelium discoideum (Social amoeba) protein is Protein LTO1 homolog.